Here is a 77-residue protein sequence, read N- to C-terminus: Large ribosomal subunit protein bL28 (77 aa).

This sequence belongs to the bacterial ribosomal protein bL28 family.

This is Large ribosomal subunit protein bL28 from Albidiferax ferrireducens (strain ATCC BAA-621 / DSM 15236 / T118) (Rhodoferax ferrireducens).